The chain runs to 75 residues: Mitochondrial import receptor subunit TOM7-1 (75 aa).

Methionine 1 bears the N-acetylmethionine mark. Positions 1-28 (MESTISLKVNKGKGKGSKGASSSDDKSK) are disordered. Over 1–46 (MESTISLKVNKGKGKGSKGASSSDDKSKFDVVKEWTNWSLKKAKVV) the chain is Cytoplasmic. The helical transmembrane segment at 47 to 64 (THYGFIPLVIFVGMNSDP) threads the bilayer. Residues 65-75 (KPHLFQLLSPV) are Mitochondrial intermembrane-facing.

This sequence belongs to the Tom7 family. In terms of assembly, forms part of the preprotein translocase complex of the outer mitochondrial membrane (TOM complex) which consists of at least 6 different proteins (TOM5, TOM6, TOM7, TOM20, TOM22/TOM9 and TOM40). In terms of tissue distribution, expressed in roots, flowers, young cotyledons and leaves.

Its subcellular location is the mitochondrion outer membrane. Its function is as follows. Seems to act as a modulator of the dynamics of the mitochondrial protein transport machinery. Seems to promote the dissociation of subunits of the outer membrane translocase. The chain is Mitochondrial import receptor subunit TOM7-1 (TOM7-1) from Arabidopsis thaliana (Mouse-ear cress).